Reading from the N-terminus, the 339-residue chain is Protein-lysine N-methyltransferase EFM3 (339 aa).

Residues Trp137 and 174-176 (GAG) each bind S-adenosyl-L-methionine. Position 177 is a phosphothreonine (Thr177). Asp199, Trp233, and Ala248 together coordinate S-adenosyl-L-methionine.

This sequence belongs to the class I-like SAM-binding methyltransferase superfamily. EEF2KMT family.

The protein resides in the cytoplasm. Its function is as follows. S-adenosyl-L-methionine-dependent protein-lysine N-methyltransferase that mono-, di- and trimethylates elongation factor 2 (EFT1/EFT2) at 'Lys-509'. The sequence is that of Protein-lysine N-methyltransferase EFM3 from Saccharomyces cerevisiae (strain ATCC 204508 / S288c) (Baker's yeast).